Here is a 308-residue protein sequence, read N- to C-terminus: MADTAAGPGGSGTRPGSKQSTNPADNYHLARRRTLQVVVSSLLTEAGFESAEKASVETLTEMLQSYISEIGRSAKSYCEHTARTQPTLSDIVVTLVEMGFNVDTLPAYAKRSQRMVITAPPVTNQPVTPKALTAGQNRPHPPHIPSHFPEFPDPHTYIKTPTYREPVSDYQILREKAASQRRDVERALTRFMAKTGETQSLFKDDVSTFPLIAARPFTIPYLTALLPSELEIQQMEETDSSEQEEQTDTENNALHISTDDSGAEKESASVLQQSSSLSGSRNGEESVIDNPYLRPVKKPKIRRKKSLS.

Residues 1–29 form a disordered region; sequence MADTAAGPGGSGTRPGSKQSTNPADNYHL. Alanine 2 carries the post-translational modification N-acetylalanine. The span at 14–24 shows a compositional bias: polar residues; that stretch reads RPGSKQSTNPA. The region spanning 35–102 is the Histone-fold domain; the sequence is LQVVVSSLLT…VTLVEMGFNV (68 aa). Threonine 128 carries the post-translational modification Phosphothreonine. The span at 235-248 shows a compositional bias: acidic residues; it reads MEETDSSEQEEQTD. A disordered region spans residues 235-308; sequence MEETDSSEQE…PKIRRKKSLS (74 aa). Over residues 268 to 281 the composition is skewed to low complexity; it reads ASVLQQSSSLSGSR. Serine 269 carries the post-translational modification Phosphoserine. The Nuclear localization signal motif lies at 292 to 305; that stretch reads YLRPVKKPKIRRKK. Residues 295 to 308 are compositionally biased toward basic residues; that stretch reads PVKKPKIRRKKSLS.

The protein belongs to the TAF8 family. As to quaternary structure, component of the TFIID basal transcription factor complex, composed of TATA-box-binding protein TBP, and a number of TBP-associated factors (TAFs), including TAF1, TAF2, TAF3, TAF4, TAF5, TAF6, TAF7, TAF8, TAF9, TAF10, TAF11, TAF12 and TAF13. Interacts with TBP, TAF1, TAF6, TAF10, TAF11 and TAF13. Component also of a small TAF complex (SMAT) containing TAF8, TAF10 and SUPT7L. Forms a heterodimer with TAF10. Interaction with TAF10 is mediated mainly via its histone fold domain while interaction with SUPT7L is via its C-terminal region. Low level of expression throughout the brain with slightly higher expression in the hippocampus.

The protein localises to the nucleus. It is found in the cytoplasm. In terms of biological role, the TFIID basal transcription factor complex plays a major role in the initiation of RNA polymerase II (Pol II)-dependent transcription. TFIID recognizes and binds promoters with or without a TATA box via its subunit TBP, a TATA-box-binding protein, and promotes assembly of the pre-initiation complex (PIC). The TFIID complex consists of TBP and TBP-associated factors (TAFs), including TAF1, TAF2, TAF3, TAF4, TAF5, TAF6, TAF7, TAF8, TAF9, TAF10, TAF11, TAF12 and TAF13. The TFIID complex structure can be divided into 3 modules TFIID-A, TFIID-B, and TFIID-C. TAF8 is involved in forming the TFIID-B module, together with TAF5. Mediates both basal and activator-dependent transcription. Plays a role in the differentiation of preadipocyte fibroblasts to adipocytes, however, does not seem to play a role in differentiation of myoblasts. Required for the integration of TAF10 in the TAF complex. May be important for survival of cells of the inner cell mass which constitute the pluripotent cell population of the early embryo. The chain is Transcription initiation factor TFIID subunit 8 (Taf8) from Mus musculus (Mouse).